Reading from the N-terminus, the 142-residue chain is Hemoglobin subunit alpha-1 (142 aa).

In terms of domain architecture, Globin spans 2–142 (VLSADDKSNV…VSTVLTSKYR (141 aa)). O2 is bound at residue His-59. His-88 serves as a coordination point for heme b.

Belongs to the globin family. As to quaternary structure, heterotetramer of two alpha chains and two beta chains. In terms of tissue distribution, red blood cells.

Functionally, involved in oxygen transport from the lung to the various peripheral tissues. Its function is as follows. Hemopressin acts as an antagonist peptide of the cannabinoid receptor CNR1. Hemopressin-binding efficiently blocks cannabinoid receptor CNR1 and subsequent signaling. The sequence is that of Hemoglobin subunit alpha-1 (HBA1) from Equus quagga burchellii (Burchell's zebra).